The chain runs to 196 residues: GTP cyclohydrolase 1 (196 aa).

Zn(2+) is bound by residues Cys86, His89, and Cys158.

Belongs to the GTP cyclohydrolase I family. In terms of assembly, toroid-shaped homodecamer, composed of two pentamers of five dimers.

The catalysed reaction is GTP + H2O = 7,8-dihydroneopterin 3'-triphosphate + formate + H(+). It participates in cofactor biosynthesis; 7,8-dihydroneopterin triphosphate biosynthesis; 7,8-dihydroneopterin triphosphate from GTP: step 1/1. The polypeptide is GTP cyclohydrolase 1 (Clostridium botulinum (strain ATCC 19397 / Type A)).